The chain runs to 249 residues: Uridylate kinase (249 aa).

21–24 (KLSG) serves as a coordination point for ATP. Residue glycine 63 participates in UMP binding. Residues glycine 64 and arginine 68 each coordinate ATP. Residues aspartate 84 and 145-152 (TGNPFVTT) each bind UMP. The ATP site is built by threonine 172, tyrosine 178, and aspartate 181.

Belongs to the UMP kinase family. In terms of assembly, homohexamer.

It localises to the cytoplasm. The catalysed reaction is UMP + ATP = UDP + ADP. It participates in pyrimidine metabolism; CTP biosynthesis via de novo pathway; UDP from UMP (UMPK route): step 1/1. Inhibited by UTP. Catalyzes the reversible phosphorylation of UMP to UDP. This Francisella tularensis subsp. holarctica (strain FTNF002-00 / FTA) protein is Uridylate kinase.